A 149-amino-acid chain; its full sequence is MRAVVQRVISSKVEVDGKVIGSIGKGLNVLLGISKEDTEEDIKYLKEKIINLRIFEDENEKLNKSLLDIGGDIIIVSQFTLYGDCRKGRRPSFIEALGGEEAYILYNKFVESIKKEVNNVATGEFGADMKVYIENDGPVTILLDSKKTF.

Positions 137-138 (GP) match the Gly-cisPro motif, important for rejection of L-amino acids motif.

Belongs to the DTD family. Homodimer.

It localises to the cytoplasm. It catalyses the reaction glycyl-tRNA(Ala) + H2O = tRNA(Ala) + glycine + H(+). The catalysed reaction is a D-aminoacyl-tRNA + H2O = a tRNA + a D-alpha-amino acid + H(+). In terms of biological role, an aminoacyl-tRNA editing enzyme that deacylates mischarged D-aminoacyl-tRNAs. Also deacylates mischarged glycyl-tRNA(Ala), protecting cells against glycine mischarging by AlaRS. Acts via tRNA-based rather than protein-based catalysis; rejects L-amino acids rather than detecting D-amino acids in the active site. By recycling D-aminoacyl-tRNA to D-amino acids and free tRNA molecules, this enzyme counteracts the toxicity associated with the formation of D-aminoacyl-tRNA entities in vivo and helps enforce protein L-homochirality. This chain is D-aminoacyl-tRNA deacylase, found in Clostridium botulinum (strain Kyoto / Type A2).